Here is a 343-residue protein sequence, read N- to C-terminus: Phosphate acyltransferase (343 aa).

The protein belongs to the PlsX family. In terms of assembly, homodimer. Probably interacts with PlsY.

The protein resides in the cytoplasm. It carries out the reaction a fatty acyl-[ACP] + phosphate = an acyl phosphate + holo-[ACP]. The protein operates within lipid metabolism; phospholipid metabolism. Its function is as follows. Catalyzes the reversible formation of acyl-phosphate (acyl-PO(4)) from acyl-[acyl-carrier-protein] (acyl-ACP). This enzyme utilizes acyl-ACP as fatty acyl donor, but not acyl-CoA. This chain is Phosphate acyltransferase, found in Coxiella burnetii (strain Dugway 5J108-111).